The primary structure comprises 294 residues: Pyridoxal 5'-phosphate synthase subunit PdxS (294 aa).

Asp-24 is a D-ribose 5-phosphate binding site. Lys-81 functions as the Schiff-base intermediate with D-ribose 5-phosphate in the catalytic mechanism. D-ribose 5-phosphate is bound at residue Gly-153. Arg-165 lines the D-glyceraldehyde 3-phosphate pocket. D-ribose 5-phosphate-binding positions include Gly-214 and 235 to 236; that span reads GS.

The protein belongs to the PdxS/SNZ family. As to quaternary structure, in the presence of PdxT, forms a dodecamer of heterodimers.

The enzyme catalyses aldehydo-D-ribose 5-phosphate + D-glyceraldehyde 3-phosphate + L-glutamine = pyridoxal 5'-phosphate + L-glutamate + phosphate + 3 H2O + H(+). The protein operates within cofactor biosynthesis; pyridoxal 5'-phosphate biosynthesis. In terms of biological role, catalyzes the formation of pyridoxal 5'-phosphate from ribose 5-phosphate (RBP), glyceraldehyde 3-phosphate (G3P) and ammonia. The ammonia is provided by the PdxT subunit. Can also use ribulose 5-phosphate and dihydroxyacetone phosphate as substrates, resulting from enzyme-catalyzed isomerization of RBP and G3P, respectively. This Anoxybacillus flavithermus (strain DSM 21510 / WK1) protein is Pyridoxal 5'-phosphate synthase subunit PdxS.